We begin with the raw amino-acid sequence, 421 residues long: MALVVQKYGGSSLESAERIRNVAERIVATKKAGNDVVVVCSAMGDTTDELLELAAAVNPVPPAREMDMLLTAGERISNALVAMAIESLGAEAQSFTGSQAGVLTTERHGNARIVDVTPGRVREALDEGKICIVAGFQGVNKETRDVTTLGRGGSDTTAVALAAALNADVCEIYSDVDGVYTADPRIVPNAQKLEKLSFEEMLELAAVGSKILVLRSVEYARAFNVPLRVRSSYSNDPGTLIAGSMEDIPVEEAVLTGVATDKSEAKVTVLGISDKPGEAAKVFRALADAEINIDMVLQNVSSVEDGTTDITFTCPRSDGRRAMEILKKLQVQGNWTNVLYDDQVGKVSLVGAGMKSHPGVTAEFMEALRDVNVNIELISTSEIRISVLIREDDLDAAARALHEQFQLGGEDEAVVYAGTGR.

Residue 7–10 participates in ATP binding; sequence KYGG. Residue 25–30 participates in substrate binding; that stretch reads RIVATK. Serine 41 contributes to the ATP binding site. Substrate is bound by residues 45–49, glutamate 74, 125–126, 151–154, and serine 154; these read DTTDE, LD, and RGGS. Residues 174-175, 180-185, and lysine 210 contribute to the ATP site; these read SD and YTADPR. 2 ACT domains span residues 267–343 and 349–421; these read VTVL…YDDQ and LVGA…GTGR. Residues aspartate 274, 274 to 279, 292 to 294, glutamine 298, 360 to 361, 374 to 375, and 381 to 382 each bind substrate; these read DKPGEA, NID, VT, NI, and SE.

This sequence belongs to the aspartokinase family. In terms of assembly, tetramer consisting of 2 isoforms Alpha (catalytic and regulation) and of a homodimer of 2 isoforms Beta (regulation). The dimerization of the beta isoforms is stabilized by the bonding of threonine.

It catalyses the reaction L-aspartate + ATP = 4-phospho-L-aspartate + ADP. The protein operates within amino-acid biosynthesis; L-lysine biosynthesis via DAP pathway; (S)-tetrahydrodipicolinate from L-aspartate: step 1/4. Its pathway is amino-acid biosynthesis; L-methionine biosynthesis via de novo pathway; L-homoserine from L-aspartate: step 1/3. It participates in amino-acid biosynthesis; L-threonine biosynthesis; L-threonine from L-aspartate: step 1/5. Its activity is regulated as follows. Feedback inhibition by lysine and threonine, but he enzyme is moderately inhibited by lysine alone, and threonine alone has no effect. Functionally, catalyzes the phosphorylation of the beta-carboxyl group of aspartic acid with ATP to yield 4-phospho-L-aspartate, which is involved in the branched biosynthetic pathway leading to the biosynthesis of amino acids lysine, threonine, isoleucine and methionine. This chain is Aspartokinase (lysC), found in Corynebacterium glutamicum (strain ATCC 13032 / DSM 20300 / JCM 1318 / BCRC 11384 / CCUG 27702 / LMG 3730 / NBRC 12168 / NCIMB 10025 / NRRL B-2784 / 534).